The following is a 572-amino-acid chain: Na(+)/citrate cotransporter (572 aa).

A run of 8 helical transmembrane segments spans residues 13–33 (SFVILFFAPILLLPLIILVPD), 53–73 (VIPVAITSLLPVLLFPLLKVL), 80–100 (VQYMTDTNMLFLGSLIVATAV), 124–144 (LMLGFMFVTAFLSMWISNTAT), 218–238 (AASIGGTATLTGTGPNVVLLG), 255–275 (SWFAFALPNMLLMLVMAWLWL), 315–335 (PLSYAECNVLFCFGLLIILWF), and 357–377 (HVTDATVAIFVAILLFIVPSQ). The N-linked (GlcNAc...) asparagine glycan is linked to Asn-382. The next 4 helical transmembrane spans lie at 410–430 (VPWGIVLLLGGGFAMAKGCET), 443–463 (PLSSVRPAIITLILSCIVAMT), 491–511 (PLYVMIPCTLSASLAFMLPVA), and 532–552 (TGLVMNILGIASVFLSVNTWG). N-linked (GlcNAc...) asparagine glycosylation is present at Asn-566.

It belongs to the SLC13A/DASS transporter (TC 2.A.47) family. NADC subfamily. As to quaternary structure, homodimer. Expressed in liver, testis and brain.

Its subcellular location is the cell membrane. It catalyses the reaction citrate(out) + 4 Na(+)(out) = citrate(in) + 4 Na(+)(in). Its activity is regulated as follows. Inhibited by Li(+). In terms of biological role, high-affinity sodium/citrate cotransporter that mediates citrate entry into cells, which is a critical participant of biochemical pathways. May function in various metabolic processes in which citrate has a critical role such as energy production (Krebs cycle), fatty acid synthesis, cholesterol synthesis, glycolysis, and gluconeogenesis. Transports citrate into the cell in a Na(+)-dependent manner, recognizing the trivalent form of citrate (physiological pH) rather than the divalent form. Can recognize succinate as a substrate, but its affinity for succinate is several fold lower than for citrate. The stoichiometry is probably 4 Na(+) for each carboxylate, irrespective of whether the translocated substrate is divalent or trivalent, rendering the process electrogenic. Involved in the regulation of citrate levels in the brain. The chain is Na(+)/citrate cotransporter (Slc13a5) from Rattus norvegicus (Rat).